The following is a 35-amino-acid chain: Photosystem II reaction center protein T (35 aa).

Residues 3-23 traverse the membrane as a helical segment; it reads SVAYILILTLAIGVLFFAIAF.

It belongs to the PsbT family. In terms of assembly, PSII is composed of 1 copy each of membrane proteins PsbA, PsbB, PsbC, PsbD, PsbE, PsbF, PsbH, PsbI, PsbJ, PsbK, PsbL, PsbM, PsbT, PsbX, PsbY, PsbZ, Psb30/Ycf12, peripheral proteins PsbO, CyanoQ (PsbQ), PsbU, PsbV and a large number of cofactors. It forms dimeric complexes.

It localises to the cellular thylakoid membrane. Its function is as follows. Found at the monomer-monomer interface of the photosystem II (PS II) dimer, plays a role in assembly and dimerization of PSII. PSII is a light-driven water plastoquinone oxidoreductase, using light energy to abstract electrons from H(2)O, generating a proton gradient subsequently used for ATP formation. The chain is Photosystem II reaction center protein T from Nostoc sp. (strain PCC 7120 / SAG 25.82 / UTEX 2576).